A 225-amino-acid polypeptide reads, in one-letter code: Ribose-5-phosphate isomerase A (225 aa).

Substrate-binding positions include 26–29 (TGST), 82–85 (DGAD), and 95–98 (KGGG). The Proton acceptor role is filled by Glu104. Residue Lys122 coordinates substrate.

This sequence belongs to the ribose 5-phosphate isomerase family. As to quaternary structure, homodimer.

It carries out the reaction aldehydo-D-ribose 5-phosphate = D-ribulose 5-phosphate. Its pathway is carbohydrate degradation; pentose phosphate pathway; D-ribose 5-phosphate from D-ribulose 5-phosphate (non-oxidative stage): step 1/1. Its function is as follows. Catalyzes the reversible conversion of ribose-5-phosphate to ribulose 5-phosphate. This is Ribose-5-phosphate isomerase A from Streptococcus sanguinis (strain SK36).